A 411-amino-acid chain; its full sequence is LL-diaminopimelate aminotransferase (411 aa).

Substrate is bound by residues Tyr15 and Gly42. Residues Tyr72, 108–109, Tyr132, Asn187, Tyr218, and 246–248 contribute to the pyridoxal 5'-phosphate site; these read AK and SFS. Positions 109, 132, and 187 each coordinate substrate. N6-(pyridoxal phosphate)lysine is present on Lys249. Residues Arg257 and Asn292 each coordinate pyridoxal 5'-phosphate. Positions 292 and 388 each coordinate substrate.

This sequence belongs to the class-I pyridoxal-phosphate-dependent aminotransferase family. LL-diaminopimelate aminotransferase subfamily. As to quaternary structure, homodimer. It depends on pyridoxal 5'-phosphate as a cofactor.

It carries out the reaction (2S,6S)-2,6-diaminopimelate + 2-oxoglutarate = (S)-2,3,4,5-tetrahydrodipicolinate + L-glutamate + H2O + H(+). Its pathway is amino-acid biosynthesis; L-lysine biosynthesis via DAP pathway; LL-2,6-diaminopimelate from (S)-tetrahydrodipicolinate (aminotransferase route): step 1/1. Involved in the synthesis of meso-diaminopimelate (m-DAP or DL-DAP), required for both lysine and peptidoglycan biosynthesis. Catalyzes the direct conversion of tetrahydrodipicolinate to LL-diaminopimelate. The chain is LL-diaminopimelate aminotransferase from Rippkaea orientalis (strain PCC 8801 / RF-1) (Cyanothece sp. (strain PCC 8801)).